A 362-amino-acid chain; its full sequence is GDSL esterase/lipase At5g45670 (362 aa).

An N-terminal signal peptide occupies residues 1 to 23 (MARMSLMIMMIMVAVTMINIAKS). The active-site Nucleophile is the Ser-36. Residues Asp-326 and His-329 contribute to the active site.

It belongs to the 'GDSL' lipolytic enzyme family.

It is found in the secreted. This chain is GDSL esterase/lipase At5g45670, found in Arabidopsis thaliana (Mouse-ear cress).